The chain runs to 205 residues: Protein DEPP1 (205 aa).

2 stretches are compositionally biased toward polar residues: residues 55 to 64 and 83 to 101; these read DKVTAQSRPN and GDSS…SPGT. The segment at 55–171 is disordered; it reads DKVTAQSRPN…RHQTSDLKSW (117 aa). Basic and acidic residues predominate over residues 138–155; that stretch reads MGKDTGRLCEARVPEHSL.

The protein resides in the cytoplasm. It localises to the peroxisome. It is found in the mitochondrion. Acts as a critical modulator of FOXO3-induced autophagy via increased cellular ROS. The sequence is that of Protein DEPP1 (Depp1) from Mus musculus (Mouse).